We begin with the raw amino-acid sequence, 183 residues long: Large ribosomal subunit protein uL5 (183 aa).

It belongs to the universal ribosomal protein uL5 family. As to quaternary structure, part of the 50S ribosomal subunit; part of the 5S rRNA/L5/L18/L25 subcomplex. Contacts the 5S rRNA and the P site tRNA. Forms a bridge to the 30S subunit in the 70S ribosome.

Its function is as follows. This is one of the proteins that bind and probably mediate the attachment of the 5S RNA into the large ribosomal subunit, where it forms part of the central protuberance. In the 70S ribosome it contacts protein S13 of the 30S subunit (bridge B1b), connecting the 2 subunits; this bridge is implicated in subunit movement. Contacts the P site tRNA; the 5S rRNA and some of its associated proteins might help stabilize positioning of ribosome-bound tRNAs. The chain is Large ribosomal subunit protein uL5 from Legionella pneumophila (strain Lens).